Reading from the N-terminus, the 398-residue chain is Ureide permease 2 (398 aa).

The Extracellular segment spans residues 1-10; it reads MYLVESKGGA. A helical transmembrane segment spans residues 11-31; it reads IACMLLALLSLGTWPAVLTLL. At 32–44 the chain is on the cytoplasmic side; that stretch reads ERRGRLPQHTYLD. The chain crosses the membrane as a helical span at residues 45–65; sequence YSITNLLAAIIIAFTFGQIGS. The Extracellular segment spans residues 66–81; that stretch reads TKPDSPNFITQLAQDN. Residues 82-102 form a helical membrane-spanning segment; sequence WPSVMFAMAGGIVLSLGNLST. At 103-104 the chain is on the cytoplasmic side; that stretch reads QY. Residues 105–125 traverse the membrane as a helical segment; it reads AWALVGLSVTEVITSSITVVI. At 126-139 the chain is on the extracellular side; sequence GSTLNYFLDDKINK. The helical transmembrane segment at 140 to 160 threads the bilayer; it reads AEILFPGVACFLIAVCLGSAV. Over 161–229 the chain is Cytoplasmic; it reads HRSNADDNKA…RAIKVFGKRK (69 aa). The tract at residues 176 to 200 is disordered; sequence ETAKQEASGPSTEIGTNSSKDLETN. Over residues 183–200 the composition is skewed to polar residues; that stretch reads SGPSTEIGTNSSKDLETN. 221–228 provides a ligand contact to ATP; that stretch reads AIKVFGKR. A helical membrane pass occupies residues 230 to 250; the sequence is IIGLAITFFAGLCFSLFSPAF. Residues 251-272 are Extracellular-facing; the sequence is NLATNDQWNRLKQGVPKLVVYT. A helical membrane pass occupies residues 273-293; it reads AFFYFSVSCFIIALILNVVFL. The Cytoplasmic segment spans residues 294 to 315; the sequence is YYPVLGLPKSSFKAYLNDWNGR. A helical membrane pass occupies residues 316-336; that stretch reads YWAFLAGFLCGFGNGLQFMGG. Over 337–341 the chain is Extracellular; that stretch reads QAAGY. The chain crosses the membrane as a helical span at residues 342-362; sequence AAADSVQALPLVSTFWGVVLF. Residues 363 to 371 are Cytoplasmic-facing; it reads GEYRRSSRK. A helical membrane pass occupies residues 372–392; the sequence is TYLLLFCMLFMFISAVAVLMA. Over 393–398 the chain is Extracellular; sequence SSGHRK.

This sequence belongs to the plant ureide permease (TC 2.A.7.19) family. Expressed in root xylem, cotyledons and leaves. Expressed in leaf blades, petioles, trichomes, stems, flower stigma, the upper part of pedicels, sepals, and the top and bottom parts of carpels in siliques.

It is found in the membrane. Proton-coupled transporter that transports a wide spectrum of oxo derivatives of heterocyclic nitrogen compounds, including allantoin, uric acid and xanthine, but not adenine. Mediates high affinity transport of uracil and 5-fluorouracil (a toxic uracil analog). Mediates transport of free pyrimidines and may function during early seedling development in salvage pathways, by the utilization of pyrimidines from seed storage tissue. In Arabidopsis thaliana (Mouse-ear cress), this protein is Ureide permease 2.